Here is a 362-residue protein sequence, read N- to C-terminus: Dual-specificity RNA methyltransferase RlmN (362 aa).

The Proton acceptor role is filled by Glu91. The 237-residue stretch at 97–333 folds into the Radical SAM core domain; it reads EDDRGTLCVS…VTTRKTRGED (237 aa). Residues Cys104 and Cys338 are joined by a disulfide bond. The [4Fe-4S] cluster site is built by Cys111, Cys115, and Cys118. S-adenosyl-L-methionine contacts are provided by residues 164–165, Ser196, 218–220, and Asn295; these read GE and SLH. Catalysis depends on Cys338, which acts as the S-methylcysteine intermediate.

The protein belongs to the radical SAM superfamily. RlmN family. Requires [4Fe-4S] cluster as cofactor.

The protein resides in the cytoplasm. It catalyses the reaction adenosine(2503) in 23S rRNA + 2 reduced [2Fe-2S]-[ferredoxin] + 2 S-adenosyl-L-methionine = 2-methyladenosine(2503) in 23S rRNA + 5'-deoxyadenosine + L-methionine + 2 oxidized [2Fe-2S]-[ferredoxin] + S-adenosyl-L-homocysteine. The catalysed reaction is adenosine(37) in tRNA + 2 reduced [2Fe-2S]-[ferredoxin] + 2 S-adenosyl-L-methionine = 2-methyladenosine(37) in tRNA + 5'-deoxyadenosine + L-methionine + 2 oxidized [2Fe-2S]-[ferredoxin] + S-adenosyl-L-homocysteine. Its function is as follows. Specifically methylates position 2 of adenine 2503 in 23S rRNA and position 2 of adenine 37 in tRNAs. m2A2503 modification seems to play a crucial role in the proofreading step occurring at the peptidyl transferase center and thus would serve to optimize ribosomal fidelity. This chain is Dual-specificity RNA methyltransferase RlmN, found in Methylobacillus flagellatus (strain ATCC 51484 / DSM 6875 / VKM B-1610 / KT).